Here is a 278-residue protein sequence, read N- to C-terminus: Large ribosomal subunit protein uL2 (278 aa).

The interval 222–278 (GVVMNPIDHPHGGGEGRTSGGRHPVTPWGKPTKGKKTRSNKSTDKFILISRHKRKKK) is disordered.

Belongs to the universal ribosomal protein uL2 family. As to quaternary structure, part of the 50S ribosomal subunit. Forms a bridge to the 30S subunit in the 70S ribosome.

In terms of biological role, one of the primary rRNA binding proteins. Required for association of the 30S and 50S subunits to form the 70S ribosome, for tRNA binding and peptide bond formation. It has been suggested to have peptidyltransferase activity; this is somewhat controversial. Makes several contacts with the 16S rRNA in the 70S ribosome. This Rhodopseudomonas palustris (strain ATCC BAA-98 / CGA009) protein is Large ribosomal subunit protein uL2.